The following is a 450-amino-acid chain: CBL-interacting protein kinase 23 (450 aa).

The Protein kinase domain occupies 13–268 (YELGRTLGEG…IAELINNEWF (256 aa)). ATP contacts are provided by residues 19-27 (LGEGTFAKV) and K42. The active-site Proton acceptor is the D136. The tract at residues 154–183 (DFGLSALSQQVREDGLLHTTCGTPNYVAPE) is activation loop. The NAF domain occupies 306 to 331 (EERPSVMNAFELISTSQGLNLGTLFE). The segment at 339 to 368 (KRETRFASRLPANEILSKIEAAAGPMGFNV) is PPI.

The protein belongs to the protein kinase superfamily. CAMK Ser/Thr protein kinase family. SNF1 subfamily. Mn(2+) serves as cofactor.

It catalyses the reaction L-seryl-[protein] + ATP = O-phospho-L-seryl-[protein] + ADP + H(+). It carries out the reaction L-threonyl-[protein] + ATP = O-phospho-L-threonyl-[protein] + ADP + H(+). Functionally, CIPK serine-threonine protein kinases interact with CBL proteins. Binding of a CBL protein to the regulatory NAF domain of CIPK protein lead to the activation of the kinase in a calcium-dependent manner. The chain is CBL-interacting protein kinase 23 (CIPK23) from Oryza sativa subsp. japonica (Rice).